Consider the following 346-residue polypeptide: N-acetyl-gamma-glutamyl-phosphate reductase (346 aa).

Cys-150 is a catalytic residue.

It belongs to the NAGSA dehydrogenase family. Type 1 subfamily.

It localises to the cytoplasm. It carries out the reaction N-acetyl-L-glutamate 5-semialdehyde + phosphate + NADP(+) = N-acetyl-L-glutamyl 5-phosphate + NADPH + H(+). It participates in amino-acid biosynthesis; L-arginine biosynthesis; N(2)-acetyl-L-ornithine from L-glutamate: step 3/4. Functionally, catalyzes the NADPH-dependent reduction of N-acetyl-5-glutamyl phosphate to yield N-acetyl-L-glutamate 5-semialdehyde. The chain is N-acetyl-gamma-glutamyl-phosphate reductase from Desulforudis audaxviator (strain MP104C).